The sequence spans 84 residues: MKQEIQTGDITALSFEQALKQLEVIVENLERGDVPLEQSIDIYERGEALRKHCDRLLKAAEAKVEKIQLSEEGSPKGVEPLDSK.

It belongs to the XseB family. Heterooligomer composed of large and small subunits.

Its subcellular location is the cytoplasm. The enzyme catalyses Exonucleolytic cleavage in either 5'- to 3'- or 3'- to 5'-direction to yield nucleoside 5'-phosphates.. Its function is as follows. Bidirectionally degrades single-stranded DNA into large acid-insoluble oligonucleotides, which are then degraded further into small acid-soluble oligonucleotides. The protein is Exodeoxyribonuclease 7 small subunit of Bartonella quintana (strain Toulouse) (Rochalimaea quintana).